A 225-amino-acid chain; its full sequence is UPF0758 protein BP1235 (225 aa).

An MPN domain is found at 103–225; that stretch reads ALANPDLVRR…TVSMAAQGHL (123 aa). Positions 174, 176, and 187 each coordinate Zn(2+). A JAMM motif motif is present at residues 174–187; the sequence is HNHPGGTAAASAAD.

This sequence belongs to the UPF0758 family.

This Bordetella pertussis (strain Tohama I / ATCC BAA-589 / NCTC 13251) protein is UPF0758 protein BP1235.